Consider the following 206-residue polypeptide: uncharacterized protein (206 aa).

2 disordered regions span residues 64–123 (NTES…DPSL) and 155–206 (VTTP…SSGG). The span at 66–79 (ESTQKTATTQQQGL) shows a compositional bias: polar residues. Low complexity predominate over residues 97-107 (AENNAQANQSE). The segment covering 108–118 (NRAESTTKAES) has biased composition (basic and acidic residues). The span at 155-167 (VTTPTGQVVQPQT) shows a compositional bias: low complexity. Over residues 182 to 198 (GSMNSKPVSRGGFSSPN) the composition is skewed to polar residues.

This is an uncharacterized protein from Haemophilus influenzae (strain ATCC 51907 / DSM 11121 / KW20 / Rd).